The chain runs to 468 residues: 3-isopropylmalate dehydratase large subunit (468 aa).

Positions 349, 409, and 412 each coordinate [4Fe-4S] cluster.

This sequence belongs to the aconitase/IPM isomerase family. LeuC type 1 subfamily. Heterodimer of LeuC and LeuD. Requires [4Fe-4S] cluster as cofactor.

It carries out the reaction (2R,3S)-3-isopropylmalate = (2S)-2-isopropylmalate. The protein operates within amino-acid biosynthesis; L-leucine biosynthesis; L-leucine from 3-methyl-2-oxobutanoate: step 2/4. Its function is as follows. Catalyzes the isomerization between 2-isopropylmalate and 3-isopropylmalate, via the formation of 2-isopropylmaleate. The polypeptide is 3-isopropylmalate dehydratase large subunit (Nitrobacter hamburgensis (strain DSM 10229 / NCIMB 13809 / X14)).